The primary structure comprises 380 residues: SAM and SH3 domain-containing protein 3 (380 aa).

The tract at residues 1 to 76 (MLRRKPSNAS…KSGKKLGKKW (76 aa)) is disordered. Residues 22–41 (LQRSSSFKDFAKSKPSSPVV) are compositionally biased toward low complexity. A phosphoserine mark is found at Ser-27, Ser-34, and Ser-42. A Phosphothreonine modification is found at Thr-61. Position 97 is a phosphoserine (Ser-97). 3 disordered regions span residues 98–174 (EEMA…TGPF), 237–256 (VGHARPSRRQSKGKRPKPKT), and 318–380 (TGSE…AGAP). Thr-103 carries the phosphothreonine modification. The residue at position 110 (Ser-110) is a Phosphoserine. Phosphothreonine is present on Thr-112. Ser-113 carries the phosphoserine modification. Tyr-116 carries the phosphotyrosine modification. Phosphoserine is present on Ser-120. Residues 143–152 (RQASTGSELC) show a composition bias toward polar residues. Residues 153–164 (SPSPGSGSFGEE) show a composition bias toward low complexity. The 62-residue stretch at 173–234 (PFCGRARVHT…KFIYVDVLPE (62 aa)) folds into the SH3 domain. The segment covering 241 to 255 (RPSRRQSKGKRPKPK) has biased composition (basic residues). Residues 252–316 (PKPKTLHELL…LTAAELLLDY (65 aa)) enclose the SAM domain. Position 318 is a phosphothreonine (Thr-318). The span at 318-327 (TGSEEAEEGA) shows a compositional bias: acidic residues. At Ser-320 the chain carries Phosphoserine.

Its function is as follows. May function as a signaling adapter protein in lymphocytes. In Homo sapiens (Human), this protein is SAM and SH3 domain-containing protein 3 (SASH3).